Here is a 370-residue protein sequence, read N- to C-terminus: MANYSHAADNILQNLSPLTAFLKLTSLGFIIGVSVVGNLLISILLAKDKTLHRAPYYFLLDLCCSDILRSAICFPFVFNSVKNGSTWTYGTLTCKVIAFLGVLSCFHTAFMLFCISVTRYLAIAHHRFYTKRLTFWTCLAVICMVWTLSVAMAFPPVLDVGTYSFIREEDQCTFQHRSFRANDSLGFMLLLALILLATQLVYLKLIFFVHDRRKMKPVQFVAAVSQNWTFHGPGASGQAAANWLAGFGRGSTPPTLLGIRQNANTTGRRRLLVLDEFKMEKRISRMFYIMTFLFLTLWGPYLVACYWRVFARGPVVPGGFLTAAVWMSFAQAGINPFVCIFSNRELRRCFSTTLLYCRKSRLPREPYCVI.

Topologically, residues 1-25 (MANYSHAADNILQNLSPLTAFLKLT) are extracellular. An N-linked (GlcNAc...) asparagine glycan is attached at Asn-3. The chain crosses the membrane as a helical span at residues 26 to 46 (SLGFIIGVSVVGNLLISILLA). Residues 47-57 (KDKTLHRAPYY) lie on the Cytoplasmic side of the membrane. The chain crosses the membrane as a helical span at residues 58–78 (FLLDLCCSDILRSAICFPFVF). Residues 79 to 96 (NSVKNGSTWTYGTLTCKV) are Extracellular-facing. Asn-83 carries an N-linked (GlcNAc...) asparagine glycan. A disulfide bond links Cys-94 and Cys-172. A helical membrane pass occupies residues 97 to 117 (IAFLGVLSCFHTAFMLFCISV). The Cytoplasmic portion of the chain corresponds to 118–137 (TRYLAIAHHRFYTKRLTFWT). The chain crosses the membrane as a helical span at residues 138–158 (CLAVICMVWTLSVAMAFPPVL). The Extracellular portion of the chain corresponds to 159–188 (DVGTYSFIREEDQCTFQHRSFRANDSLGFM). An N-linked (GlcNAc...) asparagine glycan is attached at Asn-182. A helical membrane pass occupies residues 189–209 (LLLALILLATQLVYLKLIFFV). Topologically, residues 210-286 (HDRRKMKPVQ…FKMEKRISRM (77 aa)) are cytoplasmic. Residues 287 to 307 (FYIMTFLFLTLWGPYLVACYW) traverse the membrane as a helical segment. Topologically, residues 308-313 (RVFARG) are extracellular. Residues 314–334 (PVVPGGFLTAAVWMSFAQAGI) form a helical membrane-spanning segment. At 335–370 (NPFVCIFSNRELRRCFSTTLLYCRKSRLPREPYCVI) the chain is on the cytoplasmic side.

The protein belongs to the G-protein coupled receptor 1 family. As to quaternary structure, interacts with DLG4 and DLG3.

It localises to the cell membrane. Its subcellular location is the endoplasmic reticulum. In terms of biological role, orphan receptor. In Pongo abelii (Sumatran orangutan), this protein is Probable G-protein coupled receptor 85 (GPR85).